The chain runs to 234 residues: Ubiquinone biosynthesis O-methyltransferase (234 aa).

The S-adenosyl-L-methionine site is built by R40, G59, D80, and M123.

This sequence belongs to the methyltransferase superfamily. UbiG/COQ3 family.

It catalyses the reaction a 3-demethylubiquinol + S-adenosyl-L-methionine = a ubiquinol + S-adenosyl-L-homocysteine + H(+). It carries out the reaction a 3-(all-trans-polyprenyl)benzene-1,2-diol + S-adenosyl-L-methionine = a 2-methoxy-6-(all-trans-polyprenyl)phenol + S-adenosyl-L-homocysteine + H(+). Its pathway is cofactor biosynthesis; ubiquinone biosynthesis. In terms of biological role, O-methyltransferase that catalyzes the 2 O-methylation steps in the ubiquinone biosynthetic pathway. This chain is Ubiquinone biosynthesis O-methyltransferase, found in Coxiella burnetii (strain Dugway 5J108-111).